A 233-amino-acid chain; its full sequence is Large ribosomal subunit protein uL1 (233 aa).

This sequence belongs to the universal ribosomal protein uL1 family. As to quaternary structure, part of the 50S ribosomal subunit.

In terms of biological role, binds directly to 23S rRNA. The L1 stalk is quite mobile in the ribosome, and is involved in E site tRNA release. Protein L1 is also a translational repressor protein, it controls the translation of the L11 operon by binding to its mRNA. In Geobacillus sp. (strain WCH70), this protein is Large ribosomal subunit protein uL1.